The sequence spans 457 residues: Probable ECA polymerase (457 aa).

11 helical membrane-spanning segments follow: residues 3-23, 41-61, 65-85, 118-138, 154-174, 181-201, 206-226, 227-247, 340-360, 377-397, and 408-428; these read LLQF…ILTL, MLFL…VFGF, VVPA…YAIY, IMAL…GFLL, GVAL…VYFL, WLLF…IVGG, IIIA…ITLW, MLAL…LKRY, LVVM…GLII, YKAA…IVLA, and VVFF…LYWL.

The protein belongs to the WzyE family. In terms of assembly, probably part of a complex composed of WzxE, WzyE and WzzE.

Its subcellular location is the cell inner membrane. It participates in bacterial outer membrane biogenesis; enterobacterial common antigen biosynthesis. In terms of biological role, probably involved in the polymerization of enterobacterial common antigen (ECA) trisaccharide repeat units. This is Probable ECA polymerase from Erwinia tasmaniensis (strain DSM 17950 / CFBP 7177 / CIP 109463 / NCPPB 4357 / Et1/99).